A 432-amino-acid chain; its full sequence is Fibrinogen gamma chain (432 aa).

Positions 1–24 are cleaved as a signal peptide; sequence MGRIGTPVFLAFLSALTCSLQVHA. In terms of domain architecture, Fibrinogen C-terminal spans 169-412; that stretch reads KISPITGKDC…MTTMKLLPMG (244 aa). A disulfide bridge connects residues Cys178 and Cys207. Asn227 carries N-linked (GlcNAc...) asparagine glycosylation. The Ca(2+) site is built by Asp340, Asp342, Tyr344, and Gly346. A disulfide bridge connects residues Cys348 and Cys361. The disordered stretch occupies residues 413–432; that stretch reads RDLSGHGGQQQSKGNSRGDN. The span at 421-432 shows a compositional bias: polar residues; it reads QQQSKGNSRGDN.

Heterohexamer; disulfide linked. Contains 2 sets of 3 non-identical chains (alpha, beta and gamma). The 2 heterotrimers are in head to head conformation with the N-termini in a small central domain. Conversion of fibrinogen to fibrin is triggered by thrombin, which cleaves fibrinopeptides A and B from alpha and beta chains, and thus exposes the N-terminal polymerization sites responsible for the formation of the soft clot. The soft clot is converted into the hard clot by factor XIIIA which catalyzes the epsilon-(gamma-glutamyl)lysine cross-linking between gamma chains (stronger) and between alpha chains (weaker) of different monomers.

The protein localises to the secreted. Its function is as follows. Together with fibrinogen alpha (FGA) and fibrinogen beta (FGB), polymerizes to form an insoluble fibrin matrix. Has a major function in hemostasis as one of the primary components of blood clots. The sequence is that of Fibrinogen gamma chain (FGG) from Petromyzon marinus (Sea lamprey).